Reading from the N-terminus, the 301-residue chain is Phosphate transport system permease protein PstA 2 (301 aa).

6 helical membrane-spanning segments follow: residues 36–56 (ACVC…IGVV), 83–103 (IIGT…VSVL), 127–147 (LSGI…VVYF), 149–169 (WGFS…PYIA), 209–229 (GIVT…APLL), and 274–294 (ALLL…INWL). The ABC transmembrane type-1 domain maps to 83-288 (IIGTAVLAIG…VFLLLLIFIG (206 aa)).

This sequence belongs to the binding-protein-dependent transport system permease family. CysTW subfamily.

The protein localises to the cell membrane. Part of the binding-protein-dependent transport system for phosphate; probably responsible for the translocation of the substrate across the membrane. The sequence is that of Phosphate transport system permease protein PstA 2 (pstA2) from Mycobacterium bovis (strain ATCC BAA-935 / AF2122/97).